Here is a 108-residue protein sequence, read N- to C-terminus: Peptidyl-prolyl cis-trans isomerase FKBP1B (108 aa).

The PPIase FKBP-type domain occupies 20–108 (GQTCVVHYTG…IFGVELLNLE (89 aa)).

The protein belongs to the FKBP-type PPIase family. FKBP1 subfamily. Identified in a complex composed of RYR2, FKBP1B, PKA catalytic subunit, PRKAR2A, AKAP6, and the protein phosphatases PP2A and PP1. Interacts directly with RYR2.

Its subcellular location is the cytoplasm. It localises to the sarcoplasmic reticulum. The catalysed reaction is [protein]-peptidylproline (omega=180) = [protein]-peptidylproline (omega=0). Its activity is regulated as follows. Inhibited by both FK506 and rapamycin. In terms of biological role, has the potential to contribute to the immunosuppressive and toxic effects of FK506 and rapamycin. PPIases accelerate the folding of proteins. It catalyzes the cis-trans isomerization of proline imidic peptide bonds in oligopeptides. This chain is Peptidyl-prolyl cis-trans isomerase FKBP1B (FKBP1B), found in Oryctolagus cuniculus (Rabbit).